Reading from the N-terminus, the 644-residue chain is Exoribonuclease 2 (644 aa).

Residues 189-516 enclose the RNB domain; it reads REDLTALDFV…NHRLLKAVIK (328 aa). The S1 motif domain occupies 561–643; the sequence is DTRFAAEIVD…ETRSIIARPV (83 aa).

The protein belongs to the RNR ribonuclease family. RNase II subfamily.

The protein resides in the cytoplasm. The catalysed reaction is Exonucleolytic cleavage in the 3'- to 5'-direction to yield nucleoside 5'-phosphates.. In terms of biological role, involved in mRNA degradation. Hydrolyzes single-stranded polyribonucleotides processively in the 3' to 5' direction. In Escherichia coli O127:H6 (strain E2348/69 / EPEC), this protein is Exoribonuclease 2.